A 264-amino-acid polypeptide reads, in one-letter code: Thiazole synthase (264 aa).

Lys-106 (schiff-base intermediate with DXP) is an active-site residue. 1-deoxy-D-xylulose 5-phosphate-binding positions include Gly-167, 193-194 (AG), and 215-216 (NS).

Belongs to the ThiG family. Homotetramer. Forms heterodimers with either ThiH or ThiS.

The protein resides in the cytoplasm. The catalysed reaction is [ThiS sulfur-carrier protein]-C-terminal-Gly-aminoethanethioate + 2-iminoacetate + 1-deoxy-D-xylulose 5-phosphate = [ThiS sulfur-carrier protein]-C-terminal Gly-Gly + 2-[(2R,5Z)-2-carboxy-4-methylthiazol-5(2H)-ylidene]ethyl phosphate + 2 H2O + H(+). The protein operates within cofactor biosynthesis; thiamine diphosphate biosynthesis. In terms of biological role, catalyzes the rearrangement of 1-deoxy-D-xylulose 5-phosphate (DXP) to produce the thiazole phosphate moiety of thiamine. Sulfur is provided by the thiocarboxylate moiety of the carrier protein ThiS. In vitro, sulfur can be provided by H(2)S. In Pseudomonas fluorescens (strain Pf0-1), this protein is Thiazole synthase.